Consider the following 580-residue polypeptide: DNA ligase 1 (580 aa).

E245 contacts ATP. K247 serves as the catalytic N6-AMP-lysine intermediate. ATP is bound by residues R252, R267, E297, F343, R420, and K426.

It belongs to the ATP-dependent DNA ligase family. Mg(2+) serves as cofactor.

It catalyses the reaction ATP + (deoxyribonucleotide)n-3'-hydroxyl + 5'-phospho-(deoxyribonucleotide)m = (deoxyribonucleotide)n+m + AMP + diphosphate.. Functionally, DNA ligase that seals nicks in double-stranded DNA during DNA replication, DNA recombination and DNA repair. This is DNA ligase 1 from Methanosarcina acetivorans (strain ATCC 35395 / DSM 2834 / JCM 12185 / C2A).